We begin with the raw amino-acid sequence, 345 residues long: Ferrochelatase (345 aa).

Fe cation is bound by residues histidine 215 and glutamate 296.

It belongs to the ferrochelatase family.

It is found in the cytoplasm. It catalyses the reaction heme b + 2 H(+) = protoporphyrin IX + Fe(2+). It participates in porphyrin-containing compound metabolism; protoheme biosynthesis; protoheme from protoporphyrin-IX: step 1/1. Functionally, catalyzes the ferrous insertion into protoporphyrin IX. This is Ferrochelatase from Rhodopseudomonas palustris (strain BisA53).